A 574-amino-acid chain; its full sequence is K(+)/H(+) antiporter NhaP2 (574 aa).

The next 13 helical transmembrane spans lie at 6 to 26, 30 to 50, 58 to 78, 87 to 107, 109 to 129, 173 to 193, 196 to 216, 219 to 239, 242 to 262, 271 to 291, 299 to 319, 335 to 355, and 359 to 379; these read INSF…LSPM, LGIP…EDGL, YSTA…DGGM, VALW…TSIT, LMAA…GAIV, IAIL…VSFI, FGLG…LVNL, LAEG…YAVS, LGGS…NKPT, VLDG…GLLL, ILLP…PLAV, WFIS…VFPM, and LPGA…SLLI. Residues 405–486 form the RCK C-terminal domain; that stretch reads SGVEIYPSSE…LDALSHLFSQ (82 aa).

The protein belongs to the monovalent cation:proton antiporter 1 (CPA1) transporter (TC 2.A.36) family. NhaP2 subfamily.

It is found in the cell inner membrane. It catalyses the reaction K(+)(in) + H(+)(out) = K(+)(out) + H(+)(in). K(+)/H(+) antiporter that extrudes potassium in exchange for external protons and maintains the internal concentration of potassium under toxic levels. The sequence is that of K(+)/H(+) antiporter NhaP2 from Shewanella sp. (strain W3-18-1).